A 329-amino-acid polypeptide reads, in one-letter code: Solute carrier family 35 member B1 (329 aa).

Helical transmembrane passes span 21 to 41 (AVCF…QETI), 60 to 80 (TLVF…IQFF), 91 to 111 (WLYG…NSAL), 142 to 162 (YPMA…LFLY), 175 to 195 (VFGF…LTGV), 220 to 240 (TLVL…LAFT), 250 to 270 (ILLF…TVVY), and 292 to 312 (VLLF…LVFL). The Di-lysine motif motif lies at 325–329 (KKTTH).

This sequence belongs to the nucleotide-sugar transporter family. SLC35B subfamily.

It localises to the endoplasmic reticulum membrane. Functionally, probable sugar transporter. The polypeptide is Solute carrier family 35 member B1 (slc35b1) (Danio rerio (Zebrafish)).